Consider the following 55-residue polypeptide: Large ribosomal subunit protein bL33 (55 aa).

This sequence belongs to the bacterial ribosomal protein bL33 family.

The polypeptide is Large ribosomal subunit protein bL33 (Dehalococcoides mccartyi (strain ATCC BAA-2266 / KCTC 15142 / 195) (Dehalococcoides ethenogenes (strain 195))).